The sequence spans 224 residues: LexA repressor (224 aa).

A DNA-binding region (H-T-H motif) is located at residues 31 to 51 (RAEIAAELGFKSANAAEEHLQ). Residues Ser-142 and Lys-179 each act as for autocatalytic cleavage activity in the active site.

It belongs to the peptidase S24 family. As to quaternary structure, homodimer.

It catalyses the reaction Hydrolysis of Ala-|-Gly bond in repressor LexA.. Functionally, represses a number of genes involved in the response to DNA damage (SOS response), including recA and lexA. In the presence of single-stranded DNA, RecA interacts with LexA causing an autocatalytic cleavage which disrupts the DNA-binding part of LexA, leading to derepression of the SOS regulon and eventually DNA repair. The protein is LexA repressor of Verminephrobacter eiseniae (strain EF01-2).